The chain runs to 140 residues: Nucleoside diphosphate kinase (140 aa).

ATP-binding residues include Lys10, Phe58, Arg86, Thr92, Arg103, and Asn113. The Pros-phosphohistidine intermediate role is filled by His116.

It belongs to the NDK family. In terms of assembly, homotetramer. Requires Mg(2+) as cofactor.

It localises to the cytoplasm. The enzyme catalyses a 2'-deoxyribonucleoside 5'-diphosphate + ATP = a 2'-deoxyribonucleoside 5'-triphosphate + ADP. It carries out the reaction a ribonucleoside 5'-diphosphate + ATP = a ribonucleoside 5'-triphosphate + ADP. Functionally, major role in the synthesis of nucleoside triphosphates other than ATP. The ATP gamma phosphate is transferred to the NDP beta phosphate via a ping-pong mechanism, using a phosphorylated active-site intermediate. In Anaplasma phagocytophilum (strain HZ), this protein is Nucleoside diphosphate kinase.